Reading from the N-terminus, the 93-residue chain is Small ribosomal subunit protein uS19 (93 aa).

The segment at 73-93 is disordered; the sequence is EFSPTRTFRGHVKDDRKSKRR. Over residues 83-93 the composition is skewed to basic and acidic residues; the sequence is HVKDDRKSKRR.

This sequence belongs to the universal ribosomal protein uS19 family.

Its function is as follows. Protein S19 forms a complex with S13 that binds strongly to the 16S ribosomal RNA. This chain is Small ribosomal subunit protein uS19, found in Streptomyces coelicolor (strain ATCC BAA-471 / A3(2) / M145).